Reading from the N-terminus, the 816-residue chain is uncharacterized protein (816 aa).

Disordered regions lie at residues 1 to 81 and 391 to 411; these read MDVV…NSNN and LGSNSSTNENDSNDHDSNNDF. Low complexity predominate over residues 28 to 44; the sequence is EVPPQRPRQQNRWKPWW. Residues 64–81 show a composition bias toward polar residues; sequence QGRSSPTTDFQDSVNSNN. Phosphoserine occurs at positions 76 and 79. A compositionally biased stretch (low complexity) spans 391–400; sequence LGSNSSTNEN.

This is an uncharacterized protein from Saccharomyces cerevisiae (strain ATCC 204508 / S288c) (Baker's yeast).